The sequence spans 325 residues: Beta-ketoacyl-[acyl-carrier-protein] synthase III (325 aa).

Residues Cys116 and His252 contribute to the active site. Positions Gln253 to Arg257 are ACP-binding. Residue Asn282 is part of the active site.

This sequence belongs to the thiolase-like superfamily. FabH family. In terms of assembly, homodimer.

The protein resides in the cytoplasm. It catalyses the reaction malonyl-[ACP] + acetyl-CoA + H(+) = 3-oxobutanoyl-[ACP] + CO2 + CoA. It functions in the pathway lipid metabolism; fatty acid biosynthesis. In terms of biological role, catalyzes the condensation reaction of fatty acid synthesis by the addition to an acyl acceptor of two carbons from malonyl-ACP. Catalyzes the first condensation reaction which initiates fatty acid synthesis and may therefore play a role in governing the total rate of fatty acid production. Possesses both acetoacetyl-ACP synthase and acetyl transacylase activities. Its substrate specificity determines the biosynthesis of branched-chain and/or straight-chain of fatty acids. The polypeptide is Beta-ketoacyl-[acyl-carrier-protein] synthase III (Xanthomonas euvesicatoria pv. vesicatoria (strain 85-10) (Xanthomonas campestris pv. vesicatoria)).